A 241-amino-acid polypeptide reads, in one-letter code: MTTTVIIIIFVAIFATTLHDARGATMEPCLESMKTASLPDLPYAYDALEPAISEEIMRLHHQKHHQTYVTQYNKALNSLRSAMADGDHSSVVKLQSLIKFNGGGHVNHAIFWKNLAPVHEGGGKPPHDPLASAIDAHFGSLEGLIQKMNAEGAAVQGSGWVWFGLDRELKRLVVETTANQDPLVTKGSHLVPLIGIDVWEHAYYPQYKNARAEYLKNIWTVINWKYAADVFEKHTRDLDIN.

Mn(2+) contacts are provided by histidine 60, histidine 108, aspartate 197, and histidine 201.

This sequence belongs to the iron/manganese superoxide dismutase family. In terms of assembly, homotetramer. The cofactor is Mn(2+).

It is found in the mitochondrion matrix. The enzyme catalyses 2 superoxide + 2 H(+) = H2O2 + O2. In terms of biological role, destroys superoxide anion radicals which are normally produced within the cells and which are toxic to biological systems. The polypeptide is Superoxide dismutase [Mn] 2, mitochondrial (MSD2) (Arabidopsis thaliana (Mouse-ear cress)).